The primary structure comprises 100 residues: Trp operon repressor homolog (100 aa).

The DNA-binding element occupies 59–82 (QRQISQMLGVGIATITRGSNELKS). Positions 78–93 (NELKSKSDTDKDKLKT) are enriched in basic and acidic residues. The interval 78–100 (NELKSKSDTDKDKLKTLLEQGAQ) is disordered.

It belongs to the TrpR family. Homodimer.

It localises to the cytoplasm. Its function is as follows. This protein is an aporepressor. When complexed with L-tryptophan it binds the operator region of the trp operon and prevents the initiation of transcription. The chain is Trp operon repressor homolog from Vibrio campbellii (strain ATCC BAA-1116).